We begin with the raw amino-acid sequence, 239 residues long: tRNA (guanine-N(7)-)-methyltransferase (239 aa).

The S-adenosyl-L-methionine site is built by Glu-69, Glu-94, Asp-121, and Asp-144. Asp-144 is a catalytic residue. Lys-148 is a binding site for substrate. Residues 150–155 form an interaction with RNA region; the sequence is RHNKRR. Substrate is bound by residues Asp-180 and 217–220; that span reads TKFE.

The protein belongs to the class I-like SAM-binding methyltransferase superfamily. TrmB family. In terms of assembly, monomer.

The catalysed reaction is guanosine(46) in tRNA + S-adenosyl-L-methionine = N(7)-methylguanosine(46) in tRNA + S-adenosyl-L-homocysteine. It functions in the pathway tRNA modification; N(7)-methylguanine-tRNA biosynthesis. Functionally, catalyzes the formation of N(7)-methylguanine at position 46 (m7G46) in tRNA. The polypeptide is tRNA (guanine-N(7)-)-methyltransferase (Escherichia coli O6:H1 (strain CFT073 / ATCC 700928 / UPEC)).